The sequence spans 345 residues: Protein SHI RELATED SEQUENCE 7 (345 aa).

The segment at 7-28 is disordered; sequence LGGRDHNKQDHHQEKDHNEDKS. Positions 9–28 are enriched in basic and acidic residues; that stretch reads GRDHNKQDHHQEKDHNEDKS. Positions 119, 122, 130, 135, 139, and 146 each coordinate Zn(2+). The segment at residues 119–146 is a DNA-binding region (zn(2)-C6 fungal-type; degenerate); it reads CQDCGNQAKKDCPHMRCRTCCKSRGFDC. The disordered stretch occupies residues 168–200; that stretch reads AVLPAKRIRDANSRGGGDDDDDDKEDEKNDSCG. Positions 256-259 match the Required for homo- and heterodimerization motif; the sequence is IGGH.

It belongs to the SHI protein family. Mainly expressed in the filaments of flowers, the shoot apex regions and pollen. Also present in leaves.

The protein resides in the nucleus. Transcription activator that binds DNA on 5'-ACTCTAC-3' and promotes auxin homeostasis-regulating gene expression (e.g. YUC genes), as well as genes affecting stamen development, cell expansion and timing of flowering. Synergistically with other SHI-related proteins, regulates gynoecium, stamen and leaf development in a dose-dependent manner, controlling apical-basal patterning. Promotes style and stigma formation, and influences vascular development during gynoecium development. May also have a role in the formation and/or maintenance of the shoot apical meristem (SAM). Regulates anther dehiscence and floral development. The sequence is that of Protein SHI RELATED SEQUENCE 7 (SRS7) from Arabidopsis thaliana (Mouse-ear cress).